Here is a 520-residue protein sequence, read N- to C-terminus: 2-isopropylmalate synthase (520 aa).

The 263-residue stretch at 5–267 folds into the Pyruvate carboxyltransferase domain; sequence VIIFDTTLRD…HTNINHQEIY (263 aa). 4 residues coordinate Mn(2+): aspartate 14, histidine 202, histidine 204, and asparagine 238. Residues 392–520 are regulatory domain; the sequence is RLDYFSVQSG…RLQQNNQEMV (129 aa).

It belongs to the alpha-IPM synthase/homocitrate synthase family. LeuA type 1 subfamily. In terms of assembly, homodimer. Mn(2+) is required as a cofactor.

It is found in the cytoplasm. The catalysed reaction is 3-methyl-2-oxobutanoate + acetyl-CoA + H2O = (2S)-2-isopropylmalate + CoA + H(+). It participates in amino-acid biosynthesis; L-leucine biosynthesis; L-leucine from 3-methyl-2-oxobutanoate: step 1/4. Functionally, catalyzes the condensation of the acetyl group of acetyl-CoA with 3-methyl-2-oxobutanoate (2-ketoisovalerate) to form 3-carboxy-3-hydroxy-4-methylpentanoate (2-isopropylmalate). This Yersinia pseudotuberculosis serotype O:1b (strain IP 31758) protein is 2-isopropylmalate synthase.